A 763-amino-acid polypeptide reads, in one-letter code: Translation initiation factor IF-2, chloroplastic (763 aa).

3 disordered regions span residues 1-22 (MFLN…NNSS), 52-122 (IDKS…SNSA), and 149-168 (NNKI…DQSI). Low complexity predominate over residues 13–22 (SSYSTNNNSS). The span at 73–92 (RIDKKNKNFNKAHDLLDNKK) shows a compositional bias: basic and acidic residues. Residues 93 to 104 (NKNRQRKKIKNK) are compositionally biased toward basic residues. The span at 151–168 (KIPQQKKQQVASSIDQSI) shows a compositional bias: polar residues. In terms of domain architecture, tr-type G spans 261 to 429 (NRPPVVTILG…ILLLAELENL (169 aa)). GTP-binding positions include 270–277 (GHVDHGKT), 316–320 (DTPGH), and 370–373 (SKID).

This sequence belongs to the TRAFAC class translation factor GTPase superfamily. Classic translation factor GTPase family. IF-2 subfamily.

It is found in the plastid. It localises to the chloroplast. Its function is as follows. One of the essential components for the initiation of protein synthesis. Protects formylmethionyl-tRNA from spontaneous hydrolysis and promotes its binding to the 30S ribosomal subunits. Also involved in the hydrolysis of GTP during the formation of the 70S ribosomal complex. This is Translation initiation factor IF-2, chloroplastic (infB) from Porphyra purpurea (Red seaweed).